Consider the following 131-residue polypeptide: UPF0102 protein RPD_0400 (131 aa).

The protein belongs to the UPF0102 family.

In Rhodopseudomonas palustris (strain BisB5), this protein is UPF0102 protein RPD_0400.